Reading from the N-terminus, the 217-residue chain is External core antigen (217 aa).

Residues methionine 1–alanine 20 form the signal peptide. Residues glycine 26–leucine 28 are HBEAG. A disordered region spans residues alanine 166–cysteine 217. Positions isoleucine 178 to serine 210 are enriched in basic residues. Residues serine 189–proline 195 form a 1; half-length repeat. The 3 X 8 AA repeats of S-P-R-R-R-R-S-Q stretch occupies residues serine 189–glutamine 211. Residues serine 189–cysteine 217 constitute a propeptide that is removed on maturation. Tandem repeats lie at residues serine 196–glutamine 203 and serine 204–glutamine 211.

Belongs to the orthohepadnavirus precore antigen family. In terms of assembly, homodimerizes. In terms of processing, phosphorylated. Cleaved by host furin.

The protein localises to the secreted. Its subcellular location is the host nucleus. May regulate immune response to the intracellular capsid in acting as a T-cell tolerogen, by having an immunoregulatory effect which prevents destruction of infected cells by cytotoxic T-cells. This immune regulation may predispose to chronicity during perinatal infections and prevent severe liver injury during adult infections. The chain is External core antigen from Otospermophilus beecheyi (California ground squirrel).